A 431-amino-acid chain; its full sequence is Glutamate-1-semialdehyde 2,1-aminomutase (431 aa).

An N6-(pyridoxal phosphate)lysine modification is found at K269.

The protein belongs to the class-III pyridoxal-phosphate-dependent aminotransferase family. HemL subfamily. As to quaternary structure, homodimer. It depends on pyridoxal 5'-phosphate as a cofactor.

The protein resides in the cytoplasm. It carries out the reaction (S)-4-amino-5-oxopentanoate = 5-aminolevulinate. It participates in porphyrin-containing compound metabolism; protoporphyrin-IX biosynthesis; 5-aminolevulinate from L-glutamyl-tRNA(Glu): step 2/2. This chain is Glutamate-1-semialdehyde 2,1-aminomutase, found in Francisella tularensis subsp. tularensis (strain SCHU S4 / Schu 4).